Consider the following 511-residue polypeptide: Trigger factor (511 aa).

One can recognise a PPIase FKBP-type domain in the interval Gly-168–Val-253. The disordered stretch occupies residues Asp-446–Asp-511. Positions His-455–Pro-478 are enriched in basic and acidic residues. The segment covering Lys-479 to Ala-488 has biased composition (basic residues). A compositionally biased stretch (basic and acidic residues) spans Ala-489–Pro-498. The segment covering Ala-499–Asp-511 has biased composition (basic residues).

The protein belongs to the FKBP-type PPIase family. Tig subfamily.

Its subcellular location is the cytoplasm. The enzyme catalyses [protein]-peptidylproline (omega=180) = [protein]-peptidylproline (omega=0). Involved in protein export. Acts as a chaperone by maintaining the newly synthesized protein in an open conformation. Functions as a peptidyl-prolyl cis-trans isomerase. The protein is Trigger factor of Parvibaculum lavamentivorans (strain DS-1 / DSM 13023 / NCIMB 13966).